The primary structure comprises 195 residues: Protein GrpE (195 aa).

The interval 1–30 (MSEQEKVEQEEISAELETQNEQEKPMEETE) is disordered. Positions 10–20 (EEISAELETQN) are enriched in acidic residues.

Belongs to the GrpE family. In terms of assembly, homodimer.

It localises to the cytoplasm. Participates actively in the response to hyperosmotic and heat shock by preventing the aggregation of stress-denatured proteins, in association with DnaK and GrpE. It is the nucleotide exchange factor for DnaK and may function as a thermosensor. Unfolded proteins bind initially to DnaJ; upon interaction with the DnaJ-bound protein, DnaK hydrolyzes its bound ATP, resulting in the formation of a stable complex. GrpE releases ADP from DnaK; ATP binding to DnaK triggers the release of the substrate protein, thus completing the reaction cycle. Several rounds of ATP-dependent interactions between DnaJ, DnaK and GrpE are required for fully efficient folding. The chain is Protein GrpE from Histophilus somni (strain 2336) (Haemophilus somnus).